We begin with the raw amino-acid sequence, 254 residues long: Leucyl/phenylalanyl-tRNA--protein transferase (254 aa).

The protein belongs to the L/F-transferase family.

Its subcellular location is the cytoplasm. The catalysed reaction is N-terminal L-lysyl-[protein] + L-leucyl-tRNA(Leu) = N-terminal L-leucyl-L-lysyl-[protein] + tRNA(Leu) + H(+). It carries out the reaction N-terminal L-arginyl-[protein] + L-leucyl-tRNA(Leu) = N-terminal L-leucyl-L-arginyl-[protein] + tRNA(Leu) + H(+). The enzyme catalyses L-phenylalanyl-tRNA(Phe) + an N-terminal L-alpha-aminoacyl-[protein] = an N-terminal L-phenylalanyl-L-alpha-aminoacyl-[protein] + tRNA(Phe). Its function is as follows. Functions in the N-end rule pathway of protein degradation where it conjugates Leu, Phe and, less efficiently, Met from aminoacyl-tRNAs to the N-termini of proteins containing an N-terminal arginine or lysine. The polypeptide is Leucyl/phenylalanyl-tRNA--protein transferase (Burkholderia orbicola (strain MC0-3)).